Here is a 199-residue protein sequence, read N- to C-terminus: DnaJ homolog subfamily C member 5B (199 aa).

Phosphoserine is present on residues S14 and S16. The 66-residue stretch at S19–G84 folds into the J domain.

As to quaternary structure, interacts with the chaperone complex consisting of HSC70 and SGTA. In terms of processing, palmitoylated.

It is found in the membrane. In Mus musculus (Mouse), this protein is DnaJ homolog subfamily C member 5B (Dnajc5b).